An 86-amino-acid polypeptide reads, in one-letter code: Putative defensin-like protein 189 (86 aa).

A signal peptide spans 1–28; sequence MKMAKSANEIGFITCLVVFLVLTGQSNG. 4 disulfide bridges follow: cysteine 39-cysteine 85, cysteine 52-cysteine 71, cysteine 57-cysteine 80, and cysteine 61-cysteine 82.

Belongs to the DEFL family.

The protein localises to the secreted. This Arabidopsis thaliana (Mouse-ear cress) protein is Putative defensin-like protein 189.